The sequence spans 304 residues: Homoserine O-acetyltransferase (304 aa).

Cys-142 serves as the catalytic Acyl-thioester intermediate. 2 residues coordinate substrate: Lys-163 and Ser-191. His-234 (proton acceptor) is an active-site residue. Glu-236 is an active-site residue. A substrate-binding site is contributed by Arg-248.

This sequence belongs to the MetA family.

Its subcellular location is the cytoplasm. The enzyme catalyses L-homoserine + acetyl-CoA = O-acetyl-L-homoserine + CoA. It participates in amino-acid biosynthesis; L-methionine biosynthesis via de novo pathway; O-acetyl-L-homoserine from L-homoserine: step 1/1. Its function is as follows. Transfers an acetyl group from acetyl-CoA to L-homoserine, forming acetyl-L-homoserine. The polypeptide is Homoserine O-acetyltransferase (Thermotoga neapolitana (strain ATCC 49049 / DSM 4359 / NBRC 107923 / NS-E)).